Consider the following 444-residue polypeptide: Alanyl-tRNA editing protein Aarsd1 (444 aa).

Zn(2+)-binding residues include histidine 109 and histidine 113. Serine 174 carries the phosphoserine modification. Residues cysteine 209 and histidine 213 each contribute to the Zn(2+) site.

It belongs to the class-II aminoacyl-tRNA synthetase family. Alax-L subfamily. Zn(2+) serves as cofactor.

The protein localises to the cytoplasm. Functionally, functions in trans to edit the amino acid moiety from incorrectly charged tRNA(Ala). The protein is Alanyl-tRNA editing protein Aarsd1 (AARSD1) of Bos taurus (Bovine).